Here is a 734-residue protein sequence, read N- to C-terminus: ABC transporter D family member 1 (734 aa).

Transmembrane regions (helical) follow at residues Ile52 to Gly72, Phe112 to Ala132, Phe177 to Tyr197, and Thr204 to Ile224. An ABC transmembrane type-1 domain is found at Pro63–Phe351. A compositionally biased stretch (basic and acidic residues) spans His271 to Glu286. The disordered stretch occupies residues His271–Glu296. Positions Asp332–Lys359 form a coiled coil. A helical transmembrane segment spans residues Leu374 to Leu394. Residues Ile492–Glu729 enclose the ABC transporter domain. Gly525–Ser532 is a binding site for ATP. Over residues Gln712–Asn725 the composition is skewed to low complexity. The disordered stretch occupies residues Gln712 to Asp734.

Belongs to the ABC transporter superfamily. ABCD family. Peroxisomal fatty acyl CoA transporter (TC 3.A.1.203) subfamily.

Its subcellular location is the membrane. It carries out the reaction (9Z)-octadecenoyl-CoA(in) = (9Z)-octadecenoyl-CoA(out). In Dictyostelium discoideum (Social amoeba), this protein is ABC transporter D family member 1 (abcD1).